The following is a 271-amino-acid chain: Hematopoietically-expressed homeobox protein Hhex (271 aa).

The interaction with SOX13 stretch occupies residues 1–138; it reads MQFPHPGPAA…PFLQRPLHKR (138 aa). Ser54 is subject to Phosphoserine. Positions 138–197 form a DNA-binding region, homeobox; that stretch reads RKGGQVRFSNDQTVELEKKFETQKYLSPPERKRLAKMLQLSERQVKTWFQNRRAKWRRLK. Residues 138 to 271 form a required for WNT signaling induction region; sequence RKGGQVRFSN…EGDKGYFNAG (134 aa). The disordered stretch occupies residues 195–271; sequence RLKQENPQSN…EGDKGYFNAG (77 aa). Residues 212–242 are compositionally biased toward polar residues; it reads LDTSCEQGQDLPSEQNKGASLDRSQCSPSPA. A compositionally biased stretch (acidic residues) spans 245–261; it reads EDPDSEISEDSDQEVDI.

In terms of assembly, interacts with CD81; the interaction prevents nuclear translocation of HHEX. Interacts (via N-terminus) with SOX13; abolishes the SOX13-mediated inhibition of WNT-mediated transcriptional activity via competitive inhibition of the SOX13-TCF7 complex. Interacts with EIF4E; the interaction inhibits EIF4E-mediated mRNA nuclear export.

Its subcellular location is the nucleus. The protein localises to the nuclear body. The protein resides in the cytoplasm. Recognizes the DNA sequence 5'-ATTAA-3'. Transcriptional repressor. Activator of WNT-mediated transcription in conjunction with CTNNB1. Establishes anterior identity at two levels; acts early to enhance canonical WNT-signaling by repressing expression of TLE4, and acts later to inhibit NODAL-signaling by directly targeting NODAL. Inhibits EIF4E-mediated mRNA nuclear export. May play a role in hematopoietic differentiation. The polypeptide is Hematopoietically-expressed homeobox protein Hhex (Hhex) (Mus musculus (Mouse)).